A 390-amino-acid polypeptide reads, in one-letter code: Probable protein phosphatase 2C 30 (390 aa).

Positions 1 to 10 are enriched in polar residues; sequence MQLSKNPIKQ. Disordered stretches follow at residues 1 to 20 and 40 to 85; these read MQLS…NYTD and PPLV…DSET. Low complexity predominate over residues 44–61; sequence FSPTSVKTPLSSPRSSPP. In terms of domain architecture, PPM-type phosphatase spans 128 to 385; that stretch reads YYSVYCKRGR…DDISLIIIQL (258 aa). Mn(2+) is bound by residues Asp-166, Gly-167, Asp-331, and Asp-376.

The protein belongs to the PP2C family. Mg(2+) serves as cofactor. Requires Mn(2+) as cofactor.

It carries out the reaction O-phospho-L-seryl-[protein] + H2O = L-seryl-[protein] + phosphate. The catalysed reaction is O-phospho-L-threonyl-[protein] + H2O = L-threonyl-[protein] + phosphate. This is Probable protein phosphatase 2C 30 (PP2C5) from Arabidopsis thaliana (Mouse-ear cress).